Consider the following 157-residue polypeptide: 2-C-methyl-D-erythritol 2,4-cyclodiphosphate synthase (157 aa).

A divalent metal cation-binding residues include aspartate 8 and histidine 10. Residues 8–10 (DIH) and 34–35 (HS) each bind 4-CDP-2-C-methyl-D-erythritol 2-phosphate. Position 42 (histidine 42) interacts with a divalent metal cation. 4-CDP-2-C-methyl-D-erythritol 2-phosphate contacts are provided by residues 56 to 58 (DIG), 61 to 65 (FPDTD), 132 to 135 (TTNE), and arginine 142.

It belongs to the IspF family. In terms of assembly, homotrimer. A divalent metal cation serves as cofactor.

It catalyses the reaction 4-CDP-2-C-methyl-D-erythritol 2-phosphate = 2-C-methyl-D-erythritol 2,4-cyclic diphosphate + CMP. It functions in the pathway isoprenoid biosynthesis; isopentenyl diphosphate biosynthesis via DXP pathway; isopentenyl diphosphate from 1-deoxy-D-xylulose 5-phosphate: step 4/6. Its function is as follows. Involved in the biosynthesis of isopentenyl diphosphate (IPP) and dimethylallyl diphosphate (DMAPP), two major building blocks of isoprenoid compounds. Catalyzes the conversion of 4-diphosphocytidyl-2-C-methyl-D-erythritol 2-phosphate (CDP-ME2P) to 2-C-methyl-D-erythritol 2,4-cyclodiphosphate (ME-CPP) with a corresponding release of cytidine 5-monophosphate (CMP). In Chloroherpeton thalassium (strain ATCC 35110 / GB-78), this protein is 2-C-methyl-D-erythritol 2,4-cyclodiphosphate synthase.